We begin with the raw amino-acid sequence, 596 residues long: Mitoguardin 2 (596 aa).

The next 2 helical transmembrane spans lie at 11–31 (IMQA…STFG) and 40–60 (LSPS…ALAL). Disordered regions lie at residues 67–158 (RRGR…AAWE) and 576–596 (ALPK…GQQD). Polar residues predominate over residues 110 to 123 (MSPSTRSNDTLSGV). Residues 124 to 140 (SSIAQSKHSSSSHSIAS) are compositionally biased toward low complexity. 2 stretches are compositionally biased toward polar residues: residues 143–152 (VPSSPNQSVN) and 583–596 (QAES…GQQD).

Belongs to the mitoguardin family. In terms of assembly, homodimer and heterodimer; forms heterodimers with miga1.

It is found in the mitochondrion outer membrane. Its function is as follows. Regulator of mitochondrial fusion: acts by forming homo- and heterodimers at the mitochondrial outer membrane and facilitating the formation of pld6/MitoPLD dimers. May act by regulating phospholipid metabolism via pld6/MitoPLD. This chain is Mitoguardin 2, found in Danio rerio (Zebrafish).